Consider the following 548-residue polypeptide: Natural resistance-associated macrophage protein 1 (548 aa).

The tract at residues 1 to 38 is disordered; it reads MSGDTGPPKQGGTRYGSISSPPSPEPQQAPPGGTYLSE. Residues 1-55 are Cytoplasmic-facing; that stretch reads MSGDTGPPKQGGTRYGSISSPPSPEPQQAPPGGTYLSEKIPIPDTESGTFSLRKL. The chain crosses the membrane as a helical span at residues 56–73; that stretch reads WAFTGPGFLMSIAFLDPG. Topologically, residues 74–82 are extracellular; sequence NIESDLQAG. Residues 83–102 traverse the membrane as a helical segment; that stretch reads AVAGFKLLWVLLWATVLGLL. The Cytoplasmic segment spans residues 103 to 139; it reads CQRLAARLGVVTGKDLGEVCHLYYPKVPRILLWLTIE. The helical transmembrane segment at 140–160 threads the bilayer; the sequence is LAIVGSDMQEVIGTAIAFSLL. Residues 161-164 lie on the Extracellular side of the membrane; the sequence is SAGR. A helical membrane pass occupies residues 165-184; it reads IPLWGGVLITVVDTFFFLFL. Residues 185 to 193 are Cytoplasmic-facing; sequence DNYGLRKLE. The chain crosses the membrane as a helical span at residues 194 to 214; that stretch reads AFFGFLITIMALTFGYEYVVA. The Extracellular segment spans residues 215-237; it reads QPAQGALLQGLFLPSCPGCGQPE. Residues 238 to 256 form a helical membrane-spanning segment; the sequence is LLQAVGIIGAIIMPHNIYL. The Cytoplasmic portion of the chain corresponds to 257–284; sequence HSSLVKSREVDRSRRADIREANMYFLIE. The helical transmembrane segment at 285 to 304 threads the bilayer; sequence ATIALSVSFLINLFVMAVFG. The Extracellular segment spans residues 305–346; sequence QAFYKQTNQAAFNICADSSLHDYAPIFPRNNLTVAVDIYQGG. N-linked (GlcNAc...) asparagine glycosylation occurs at N335. A helical membrane pass occupies residues 347–366; the sequence is VILGCLFGPPALYIWAVGLL. At 367–397 the chain is on the cytoplasmic side; that stretch reads AAGQSSTMTGTYAGQFVMEGFLKLRWSRFAR. A helical membrane pass occupies residues 398–415; that stretch reads VLLTRSCAILPTVLLAVF. At 416–426 the chain is on the extracellular side; the sequence is RDLRDLSGLND. The helical transmembrane segment at 427-447 threads the bilayer; it reads LLNVLQSLLLPFAVLPILTFT. Residues 448–463 lie on the Cytoplasmic side of the membrane; that stretch reads SMPALMQEFANGLVSK. A helical membrane pass occupies residues 464–485; sequence VITSSIMVLVCAVNLYFVISYL. Over 486-493 the chain is Extracellular; that stretch reads PSLPHPAY. A helical membrane pass occupies residues 494–513; sequence FSLVALLAAAYLGLTTYLVW. At 514–548 the chain is on the cytoplasmic side; sequence TCLITQGATLLAHSSHQRFLYGLPEEDQEKGRTSG.

It belongs to the NRAMP family.

Its subcellular location is the late endosome membrane. It is found in the lysosome membrane. It catalyses the reaction Zn(2+)(in) + H(+)(out) = Zn(2+)(out) + H(+)(in). The enzyme catalyses Fe(2+)(in) + H(+)(out) = Fe(2+)(out) + H(+)(in). It carries out the reaction Mn(2+)(in) + H(+)(out) = Mn(2+)(out) + H(+)(in). Functionally, macrophage-specific antiporter that fluxes metal ions in either direction against a proton gradient. Localized to late endosomal lysosomal membranes, delivers bivalent cations from the cytosol into these acidic compartments where they may directly affect antimicrobial activity. Involved in iron metabolism and host natural resistance to infection with intracellular parasites. Pathogen resistance involves sequestration of Fe(2+) and Mn(2+), cofactors of both prokaryotic and eukaryotic catalases and superoxide dismutases, not only to protect the macrophage against its own generation of reactive oxygen species, but to deny the cations to the pathogen for synthesis of its protective enzymes. This is Natural resistance-associated macrophage protein 1 (SLC11A1) from Bos taurus (Bovine).